We begin with the raw amino-acid sequence, 254 residues long: Imidazole glycerol phosphate synthase subunit HisF (254 aa).

Residues aspartate 14 and aspartate 133 contribute to the active site.

This sequence belongs to the HisA/HisF family. Heterodimer of HisH and HisF.

It is found in the cytoplasm. It carries out the reaction 5-[(5-phospho-1-deoxy-D-ribulos-1-ylimino)methylamino]-1-(5-phospho-beta-D-ribosyl)imidazole-4-carboxamide + L-glutamine = D-erythro-1-(imidazol-4-yl)glycerol 3-phosphate + 5-amino-1-(5-phospho-beta-D-ribosyl)imidazole-4-carboxamide + L-glutamate + H(+). It functions in the pathway amino-acid biosynthesis; L-histidine biosynthesis; L-histidine from 5-phospho-alpha-D-ribose 1-diphosphate: step 5/9. Functionally, IGPS catalyzes the conversion of PRFAR and glutamine to IGP, AICAR and glutamate. The HisF subunit catalyzes the cyclization activity that produces IGP and AICAR from PRFAR using the ammonia provided by the HisH subunit. The chain is Imidazole glycerol phosphate synthase subunit HisF from Nitratiruptor sp. (strain SB155-2).